A 286-amino-acid chain; its full sequence is Movement protein (286 aa).

The protein belongs to the tenuiviruses pc4 protein family. In terms of assembly, interacts with the rice proteins DJA6 and HSP17.9A.

The protein localises to the host cytoplasm. Transports viral genome to neighboring plant cells directly through plasmosdesmata, without any budding. The movement protein allows efficient cell to cell propagation, by bypassing the host cell wall barrier. In Avena sativa (Oat), this protein is Movement protein.